The primary structure comprises 147 residues: Large ribosomal subunit protein uL11 (147 aa).

It belongs to the universal ribosomal protein uL11 family. As to quaternary structure, part of the ribosomal stalk of the 50S ribosomal subunit. Interacts with L10 and the large rRNA to form the base of the stalk. L10 forms an elongated spine to which L12 dimers bind in a sequential fashion forming a multimeric L10(L12)X complex. One or more lysine residues are methylated.

Forms part of the ribosomal stalk which helps the ribosome interact with GTP-bound translation factors. This is Large ribosomal subunit protein uL11 from Cytophaga hutchinsonii (strain ATCC 33406 / DSM 1761 / CIP 103989 / NBRC 15051 / NCIMB 9469 / D465).